A 251-amino-acid chain; its full sequence is Small ribosomal subunit protein uS2 (251 aa).

This sequence belongs to the universal ribosomal protein uS2 family.

In Novosphingobium aromaticivorans (strain ATCC 700278 / DSM 12444 / CCUG 56034 / CIP 105152 / NBRC 16084 / F199), this protein is Small ribosomal subunit protein uS2.